A 61-amino-acid polypeptide reads, in one-letter code: Photosystem II reaction center protein K (61 aa).

The propeptide occupies 1–24 (MLNIFSLICICLHSTLYSSSFFLA). Residues 36–56 (IVDFMPVIPLLFFLLAFVWQA) traverse the membrane as a helical segment.

Belongs to the PsbK family. PSII is composed of 1 copy each of membrane proteins PsbA, PsbB, PsbC, PsbD, PsbE, PsbF, PsbH, PsbI, PsbJ, PsbK, PsbL, PsbM, PsbT, PsbX, PsbY, PsbZ, Psb30/Ycf12, at least 3 peripheral proteins of the oxygen-evolving complex and a large number of cofactors. It forms dimeric complexes.

Its subcellular location is the plastid. The protein resides in the chloroplast thylakoid membrane. Functionally, one of the components of the core complex of photosystem II (PSII). PSII is a light-driven water:plastoquinone oxidoreductase that uses light energy to abstract electrons from H(2)O, generating O(2) and a proton gradient subsequently used for ATP formation. It consists of a core antenna complex that captures photons, and an electron transfer chain that converts photonic excitation into a charge separation. The polypeptide is Photosystem II reaction center protein K (Eucalyptus globulus subsp. globulus (Tasmanian blue gum)).